A 217-amino-acid polypeptide reads, in one-letter code: Adenylate kinase (217 aa).

Residue 11–16 (GAGKGT) participates in ATP binding. The tract at residues 31 to 60 (STGDMFREAMANETPVGLEAKSYIDKGDLV) is NMP. AMP-binding positions include T32, R37, 58–60 (DLV), 86–89 (GFPR), and Q93. The segment at 127–165 (ARYICKNCGATYNKISNPTKVEGTCDRCGGHEFFQREDD) is LID. R128 is an ATP binding site. The Zn(2+) site is built by C131 and C134. ATP is bound at residue 137–138 (TY). Zn(2+)-binding residues include C151 and C154. The AMP site is built by R162 and R173. Q201 serves as a coordination point for ATP.

This sequence belongs to the adenylate kinase family. Monomer.

It is found in the cytoplasm. The enzyme catalyses AMP + ATP = 2 ADP. It participates in purine metabolism; AMP biosynthesis via salvage pathway; AMP from ADP: step 1/1. Catalyzes the reversible transfer of the terminal phosphate group between ATP and AMP. Plays an important role in cellular energy homeostasis and in adenine nucleotide metabolism. The chain is Adenylate kinase from Lactobacillus gasseri (strain ATCC 33323 / DSM 20243 / BCRC 14619 / CIP 102991 / JCM 1131 / KCTC 3163 / NCIMB 11718 / NCTC 13722 / AM63).